Here is a 147-residue protein sequence, read N- to C-terminus: Hemoglobin subunit beta (147 aa).

Residues 3–147 enclose the Globin domain; the sequence is EWTDFERATI…VVSSLGRQYH (145 aa). His-64 and His-93 together coordinate heme b.

It belongs to the globin family. As to quaternary structure, hb 1 is a heterotetramer of two alpha-1 and two beta chains. Hb 2 is a heterotetramer of two alpha-2 and two beta chains. In terms of tissue distribution, red blood cells.

Involved in oxygen transport from gills to the various peripheral tissues. The chain is Hemoglobin subunit beta (hbb) from Cottoperca gobio (Frogmouth).